The primary structure comprises 54 residues: uncharacterized protein (54 aa).

Residues 32–52 (LFSLLVLIILCFIDPILFYFI) form a helical membrane-spanning segment.

It localises to the host membrane. This is an uncharacterized protein from Cassava vein mosaic virus (CsVMV).